Reading from the N-terminus, the 57-residue chain is Large ribosomal subunit protein bL32B (57 aa).

The protein belongs to the bacterial ribosomal protein bL32 family.

The protein is Large ribosomal subunit protein bL32B of Listeria welshimeri serovar 6b (strain ATCC 35897 / DSM 20650 / CCUG 15529 / CIP 8149 / NCTC 11857 / SLCC 5334 / V8).